The chain runs to 361 residues: Chorismate synthase (361 aa).

Arg-48 serves as a coordination point for NADP(+). FMN contacts are provided by residues 125 to 127 (RSS), 238 to 239 (NA), Gly-278, 293 to 297 (KPTSS), and Arg-319.

This sequence belongs to the chorismate synthase family. As to quaternary structure, homotetramer. It depends on FMNH2 as a cofactor.

It carries out the reaction 5-O-(1-carboxyvinyl)-3-phosphoshikimate = chorismate + phosphate. It functions in the pathway metabolic intermediate biosynthesis; chorismate biosynthesis; chorismate from D-erythrose 4-phosphate and phosphoenolpyruvate: step 7/7. Functionally, catalyzes the anti-1,4-elimination of the C-3 phosphate and the C-6 proR hydrogen from 5-enolpyruvylshikimate-3-phosphate (EPSP) to yield chorismate, which is the branch point compound that serves as the starting substrate for the three terminal pathways of aromatic amino acid biosynthesis. This reaction introduces a second double bond into the aromatic ring system. The polypeptide is Chorismate synthase (Aliivibrio fischeri (strain MJ11) (Vibrio fischeri)).